The sequence spans 194 residues: Glycerol-3-phosphate acyltransferase (194 aa).

Transmembrane regions (helical) follow at residues 2 to 22 (LIEI…TGLL), 51 to 71 (SVGI…VLAA), 80 to 100 (WIAL…FLGF), 112 to 132 (VFLG…VAVV), and 155 to 175 (FLSG…LVIW).

This sequence belongs to the PlsY family. In terms of assembly, probably interacts with PlsX.

The protein localises to the cell inner membrane. The catalysed reaction is an acyl phosphate + sn-glycerol 3-phosphate = a 1-acyl-sn-glycero-3-phosphate + phosphate. The protein operates within lipid metabolism; phospholipid metabolism. In terms of biological role, catalyzes the transfer of an acyl group from acyl-phosphate (acyl-PO(4)) to glycerol-3-phosphate (G3P) to form lysophosphatidic acid (LPA). This enzyme utilizes acyl-phosphate as fatty acyl donor, but not acyl-CoA or acyl-ACP. This is Glycerol-3-phosphate acyltransferase from Geobacter metallireducens (strain ATCC 53774 / DSM 7210 / GS-15).